The primary structure comprises 335 residues: Glyceraldehyde-3-phosphate dehydrogenase (335 aa).

Residues 12–13 (RI), Asp-34, and Lys-79 each bind NAD(+). D-glyceraldehyde 3-phosphate contacts are provided by residues 150–152 (SCT), Thr-181, 210–211 (TG), and Arg-233. Residue Cys-151 is the Nucleophile of the active site. Asn-315 provides a ligand contact to NAD(+).

This sequence belongs to the glyceraldehyde-3-phosphate dehydrogenase family. As to quaternary structure, homotetramer.

It is found in the cytoplasm. The enzyme catalyses D-glyceraldehyde 3-phosphate + phosphate + NAD(+) = (2R)-3-phospho-glyceroyl phosphate + NADH + H(+). It functions in the pathway carbohydrate degradation; glycolysis; pyruvate from D-glyceraldehyde 3-phosphate: step 1/5. The sequence is that of Glyceraldehyde-3-phosphate dehydrogenase (GPD) from Debaryomyces hansenii (strain ATCC 36239 / CBS 767 / BCRC 21394 / JCM 1990 / NBRC 0083 / IGC 2968) (Yeast).